A 438-amino-acid polypeptide reads, in one-letter code: Na(+)/H(+) antiporter NhaA (438 aa).

11 consecutive transmembrane segments (helical) span residues 23–43, 62–82, 104–124, 133–153, 162–182, 185–205, 212–232, 302–322, 337–357, 372–392, and 410–430; these read FGGIFLFLNAVLAMVVANSFV, FFIGFSLHNWIDDVLMALFFL, SFPVIAAIGGMIAPGLIYFFL, GFGIPMATDIAFALGVIMLLG, VFLITLAVADDLGAIMVIALF, TNLKFAWLLGALGVVLVLALL, SLIPYLLLGVLLWFCVHQSGI, FLAPISGYFIMPLFAFANAGV, LGVILGLCLGKPLGIFLITFI, WWHILGAGFLAGIGFTMSMFI, and IAILLGSLISGIIGALYLFLL.

It belongs to the NhaA Na(+)/H(+) (TC 2.A.33) antiporter family.

The protein localises to the cell inner membrane. The enzyme catalyses Na(+)(in) + 2 H(+)(out) = Na(+)(out) + 2 H(+)(in). In terms of biological role, na(+)/H(+) antiporter that extrudes sodium in exchange for external protons. This chain is Na(+)/H(+) antiporter NhaA, found in Helicobacter acinonychis (strain Sheeba).